Here is a 168-residue protein sequence, read N- to C-terminus: MSSLDNDKTENFIQERLDSLHEIDCKVVTLLDQFSSIFQSFYTKSKEDFSQQTSDIYSTLSKVAIDLRKEIKIMDDNIGAYDKNDDNVMILPISNVDQKNTKLGRKRLDLELAELKRLISDEKQVETLENESNNEIQPKTESDTNQVETNENGNDINNKESEDIEMKE.

Residues 126–168 (ETLENESNNEIQPKTESDTNQVETNENGNDINNKESEDIEMKE) are disordered. Over residues 130–156 (NESNNEIQPKTESDTNQVETNENGNDI) the composition is skewed to polar residues. Basic and acidic residues predominate over residues 157–168 (NNKESEDIEMKE).

The protein belongs to the Mediator complex subunit 11 family. As to quaternary structure, component of the Mediator complex.

It is found in the nucleus. Component of the Mediator complex, a coactivator involved in the regulated transcription of nearly all RNA polymerase II-dependent genes. Mediator functions as a bridge to convey information from gene-specific regulatory proteins to the basal RNA polymerase II transcription machinery. Mediator is recruited to promoters by direct interactions with regulatory proteins and serves as a scaffold for the assembly of a functional pre-initiation complex with RNA polymerase II and the general transcription factors. The chain is Mediator of RNA polymerase II transcription subunit 11 (MED11) from Candida albicans (strain SC5314 / ATCC MYA-2876) (Yeast).